The chain runs to 155 residues: Xanthine-guanine phosphoribosyltransferase (155 aa).

5-phospho-alpha-D-ribose 1-diphosphate contacts are provided by residues 37–38 and 91–99; these read RG and DDLVDTGNT. Asp92 is a Mg(2+) binding site. Asp95 and Ile138 together coordinate guanine. Residues Asp95 and Ile138 each coordinate xanthine. GMP contacts are provided by residues 95–99 and 137–138; these read DTGNT and WI.

This sequence belongs to the purine/pyrimidine phosphoribosyltransferase family. XGPT subfamily. In terms of assembly, homotetramer. Mg(2+) is required as a cofactor.

The protein resides in the cell inner membrane. The enzyme catalyses GMP + diphosphate = guanine + 5-phospho-alpha-D-ribose 1-diphosphate. The catalysed reaction is XMP + diphosphate = xanthine + 5-phospho-alpha-D-ribose 1-diphosphate. It carries out the reaction IMP + diphosphate = hypoxanthine + 5-phospho-alpha-D-ribose 1-diphosphate. It participates in purine metabolism; GMP biosynthesis via salvage pathway; GMP from guanine: step 1/1. The protein operates within purine metabolism; XMP biosynthesis via salvage pathway; XMP from xanthine: step 1/1. Its function is as follows. Acts on guanine, xanthine and to a lesser extent hypoxanthine. Functionally, purine salvage pathway enzyme that catalyzes the transfer of the ribosyl-5-phosphate group from 5-phospho-alpha-D-ribose 1-diphosphate (PRPP) to the N9 position of the 6-oxopurines guanine and xanthine to form the corresponding ribonucleotides GMP (guanosine 5'-monophosphate) and XMP (xanthosine 5'-monophosphate), with the release of PPi. To a lesser extent, also acts on hypoxanthine. The polypeptide is Xanthine-guanine phosphoribosyltransferase (Haemophilus influenzae (strain ATCC 51907 / DSM 11121 / KW20 / Rd)).